Here is a 1293-residue protein sequence, read N- to C-terminus: Galactose/N-acetyl-D-galactosamine lectin heavy subunit 1 (1293 aa).

Positions 1 to 15 are cleaved as a signal peptide; the sequence is MKLLLLNILLLCCLA. The Extracellular segment spans residues 16–1234; the sequence is DKLNEFSADI…NNVGAIAAAT (1219 aa). Residues N95, N198, N234, N261, N337, N377, N390, N468, N487, N643, N659, N890, N992, N1138, N1204, and N1214 are each glycosylated (N-linked (GlcNAc...) asparagine). A helical transmembrane segment spans residues 1235–1255; the sequence is TVAVVVVAVVVALIVVSIGLF. Topologically, residues 1256–1293 are cytoplasmic; that stretch reads KTYQLVSSAMKNAITITNENAEYVGADNEATNAATFNG.

In terms of assembly, heterodimer composed of a 170 kDa heavy subunit (hgl) and a 31/35 kDa light subunit (lgl); disulfide-linked. Post-translationally, N-glycosylated.

It localises to the cell membrane. Functionally, lectin which binds galactose and N-acetyl-D-galactosamine of host glycoproteins and thus mediates adhesion to host cells. Mediates adherence to host colonic mucins, an essential step for pathogenic tissue invasion. The sequence is that of Galactose/N-acetyl-D-galactosamine lectin heavy subunit 1 from Entamoeba histolytica (strain ATCC 30459 / HM-1:IMSS / ABRM).